The following is a 388-amino-acid chain: Yellow-related salivary protein SP03 (388 aa).

The first 18 residues, 1–18, serve as a signal peptide directing secretion; it reads MKIFLCLIAVVSLQGVLA. Residue asparagine 29 is glycosylated (N-linked (GlcNAc...) asparagine).

It belongs to the major royal jelly protein family. Female salivary gland (at protein level).

The protein localises to the secreted. In terms of biological role, probably modulates blood feeding of sand flies on vertebrate species by binding and sequestering different mediators involved in the host response. Binds biogenic amines. Binds noradrenaline with medium affinity. Binds octopamine with low affinity. Poorly binds histamine, adrenaline and serotonin. The polypeptide is Yellow-related salivary protein SP03 (Phlebotomus perniciosus (Phlebotomine sand fly)).